The sequence spans 320 residues: Taste receptor type 2 member 109 (320 aa).

Residues methionine 1–asparagine 14 are Extracellular-facing. A helical membrane pass occupies residues valine 15 to alanine 35. Over leucine 36 to arginine 62 the chain is Cytoplasmic. A helical transmembrane segment spans residues isoleucine 63–alanine 83. The Extracellular segment spans residues serine 84 to asparagine 94. The helical transmembrane segment at leucine 95–phenylalanine 115 threads the bilayer. Over leucine 116–lysine 135 the chain is Cytoplasmic. The helical transmembrane segment at valine 136–asparagine 156 threads the bilayer. Residues leucine 157 to histidine 191 are Extracellular-facing. N-linked (GlcNAc...) asparagine glycosylation is present at asparagine 170. A helical membrane pass occupies residues isoleucine 192–serine 212. The Cytoplasmic portion of the chain corresponds to leucine 213–glutamine 240. The chain crosses the membrane as a helical span at residues threonine 241–tryptophan 261. Over lysine 262–leucine 270 the chain is Extracellular. Residues phenylalanine 271–isoleucine 291 form a helical membrane-spanning segment. Topologically, residues leucine 292 to leucine 320 are cytoplasmic.

Belongs to the G-protein coupled receptor T2R family.

It localises to the membrane. Functionally, putative taste receptor which may play a role in the perception of bitterness. This is Taste receptor type 2 member 109 from Rattus norvegicus (Rat).